We begin with the raw amino-acid sequence, 469 residues long: Alpha-2C adrenergic receptor (469 aa).

The disordered stretch occupies residues 1–29; the sequence is MDLQLTTNSTDSGDRGGSSNESLQRQPPS. At 1–36 the chain is on the extracellular side; that stretch reads MDLQLTTNSTDSGDRGGSSNESLQRQPPSQYSPAEV. N-linked (GlcNAc...) asparagine glycans are attached at residues Asn-8 and Asn-20. The chain crosses the membrane as a helical span at residues 37 to 62; sequence AGLAAVVSFLIVFTIVGNVLVVIAVL. The Cytoplasmic segment spans residues 63 to 73; sequence TSRALKAPQNL. The helical transmembrane segment at 74-99 threads the bilayer; the sequence is FQVSLASADILVATLVMPFSLANELM. Topologically, residues 100-109 are extracellular; it reads NYWYFGKVWC. Cys-109 and Cys-187 are oxidised to a cystine. The helical transmembrane segment at 110–132 threads the bilayer; the sequence is VIYLALDVLFCTSSIVHLCAISL. The Cytoplasmic segment spans residues 133–154; it reads DRYWSVTQAVEYNLKRTPRRIK. Residues 155 to 175 form a helical membrane-spanning segment; it reads GIIVTVWLISAVISFPPLISL. Over 176 to 194 the chain is Extracellular; that stretch reads YRDPEDDLYPQCELNDETW. Residues 195 to 216 traverse the membrane as a helical segment; sequence YILSSCIGSFFAPCIIMVLVYV. Residues 217–386 lie on the Cytoplasmic side of the membrane; that stretch reads RIYRVAKLRT…RKVTQAREKR (170 aa). Disordered regions lie at residues 232-261 and 279-353; these read KRTV…AAAA and HHHH…SRLS. Residues 279–296 show a composition bias toward basic residues; that stretch reads HHHHHLHHHHHHHHHQLR. Residues 301 to 310 are compositionally biased toward acidic residues; sequence LEDIELEESS. Low complexity predominate over residues 331–353; that stretch reads RGFSFSFSSTKGGQSAGAGSRLS. A helical membrane pass occupies residues 387–407; it reads FTFVLAVVMGVFVVCWFPFFF. The Extracellular portion of the chain corresponds to 408–427; that stretch reads TYSLYGICREACQVPETLFK. A helical transmembrane segment spans residues 428 to 448; sequence FFFWIGYCNSSLNPVIYTIFN. The Cytoplasmic portion of the chain corresponds to 449–469; that stretch reads QDFRRSFKHILFKKKKKTSLQ.

The protein belongs to the G-protein coupled receptor 1 family. Adrenergic receptor subfamily. ADRA2C sub-subfamily.

It localises to the cell membrane. Functionally, alpha-2 adrenergic receptors mediate the catecholamine-induced inhibition of adenylate cyclase through the action of G proteins. This is Alpha-2C adrenergic receptor (ADRA2C) from Didelphis virginiana (North American opossum).